Consider the following 299-residue polypeptide: MGKRIFLFILTNILVITTIGIVLSVISAATGVGSYIGADGRISMVALLVFSAVVGFVGSFMSLAMSRWMAKMMMGVRVLNPEKDSLTYDEQQLVDRVHRLSRAAGLSKMPEVGIYQSSEVNAFATGPSKRRSLVAVSTGLLHEMDDAAVEGVIAHEVAHVANGDMVTMTLLQGIVNTFVVFLSRIAAWIASRFVSREELVPIVHFIAVIVFQIIFSVLGSLVVFAYSRHREFHADRGGADLAGKDKMVHALRSLEAYTSRIKDDDQTAVATLKISGKRKASLFSTHPDLNERIRRLEAK.

Transmembrane regions (helical) follow at residues I5 to V25 and M44 to A64. Residue H155 participates in Zn(2+) binding. E156 is a catalytic residue. Residue H159 participates in Zn(2+) binding. 2 helical membrane-spanning segments follow: residues L170–A190 and F205–A225. E231 contributes to the Zn(2+) binding site.

The protein belongs to the peptidase M48B family. The cofactor is Zn(2+).

It localises to the cell membrane. This is Protease HtpX homolog from Bacillus pumilus (strain SAFR-032).